The chain runs to 340 residues: UDP-N-acetylenolpyruvoylglucosamine reductase (340 aa).

Positions 14–185 (HVEATARWLL…VAVEFNLPLL (172 aa)) constitute an FAD-binding PCMH-type domain. The active site involves arginine 162. Serine 235 (proton donor) is an active-site residue. Glutamate 332 is an active-site residue.

The protein belongs to the MurB family. Requires FAD as cofactor.

It is found in the cytoplasm. It carries out the reaction UDP-N-acetyl-alpha-D-muramate + NADP(+) = UDP-N-acetyl-3-O-(1-carboxyvinyl)-alpha-D-glucosamine + NADPH + H(+). Its pathway is cell wall biogenesis; peptidoglycan biosynthesis. Cell wall formation. The protein is UDP-N-acetylenolpyruvoylglucosamine reductase of Xanthomonas oryzae pv. oryzae (strain KACC10331 / KXO85).